Consider the following 389-residue polypeptide: MENADRIKNLPPYLFAEIDKMIARAKKEGVDVISFGIGDPDQPTPDNIINKMIEAVKDPSTHSYPSYEGMYEYRKTVADWYKNNYGRELDPDKEVVSLIGSKEGIAHLPFCYINPGDIALVPDPGYPVYKTSVLLAGGKPVQVPLVEENNFLPDLKAIDEDIARKAKLFFINYPNNPTGAIAPEEFYEELIDFADKYDIIIAHDAAYSEIGLDGYNPPSFMQFEGAKKVGIEFNSLSKPFNMTGWRVGWAVGRSDVIESLGRIKTNIDSGIFEAIQYAGIEALTGPEDNIEKMTELYSKRRDLLVEGLRELGWEVPVNKATFYIWAKVPEGYNSTEFSTHVFEKTGIFFTPGNGYGEFGEGYVRIALTVTEERIKEALERLKNSDIKFK.

Residues Tyr13 and Gly38 each coordinate substrate. Pyridoxal 5'-phosphate is bound by residues Tyr67, 101–102 (SK), Tyr126, Asn176, Tyr207, and 235–237 (SLS). Substrate contacts are provided by Lys102, Tyr126, and Asn176. Lys238 carries the N6-(pyridoxal phosphate)lysine modification. Pyridoxal 5'-phosphate is bound at residue Arg246. Position 364 (Arg364) interacts with substrate.

Belongs to the class-I pyridoxal-phosphate-dependent aminotransferase family. LL-diaminopimelate aminotransferase subfamily. Homodimer. Requires pyridoxal 5'-phosphate as cofactor.

The catalysed reaction is (2S,6S)-2,6-diaminopimelate + 2-oxoglutarate = (S)-2,3,4,5-tetrahydrodipicolinate + L-glutamate + H2O + H(+). The protein operates within amino-acid biosynthesis; L-lysine biosynthesis via DAP pathway; LL-2,6-diaminopimelate from (S)-tetrahydrodipicolinate (aminotransferase route): step 1/1. Involved in the synthesis of meso-diaminopimelate (m-DAP or DL-DAP), required for both lysine and peptidoglycan biosynthesis. Catalyzes the direct conversion of tetrahydrodipicolinate to LL-diaminopimelate. The polypeptide is LL-diaminopimelate aminotransferase (Halothermothrix orenii (strain H 168 / OCM 544 / DSM 9562)).